The chain runs to 146 residues: UPF0178 protein LMOf2365_1475 (146 aa).

Belongs to the UPF0178 family.

This Listeria monocytogenes serotype 4b (strain F2365) protein is UPF0178 protein LMOf2365_1475.